The primary structure comprises 920 residues: Isoleucine--tRNA ligase (920 aa).

The short motif at 57-67 is the 'HIGH' region element; it reads PYANGDIHLGH. Position 560 (E560) interacts with L-isoleucyl-5'-AMP. The short motif at 601-605 is the 'KMSKS' region element; sequence KMSKS. Residue K604 coordinates ATP. Positions 890, 893, 910, and 913 each coordinate Zn(2+).

This sequence belongs to the class-I aminoacyl-tRNA synthetase family. IleS type 1 subfamily. As to quaternary structure, monomer. It depends on Zn(2+) as a cofactor.

The protein localises to the cytoplasm. The enzyme catalyses tRNA(Ile) + L-isoleucine + ATP = L-isoleucyl-tRNA(Ile) + AMP + diphosphate. Functionally, catalyzes the attachment of isoleucine to tRNA(Ile). As IleRS can inadvertently accommodate and process structurally similar amino acids such as valine, to avoid such errors it has two additional distinct tRNA(Ile)-dependent editing activities. One activity is designated as 'pretransfer' editing and involves the hydrolysis of activated Val-AMP. The other activity is designated 'posttransfer' editing and involves deacylation of mischarged Val-tRNA(Ile). In Caldicellulosiruptor saccharolyticus (strain ATCC 43494 / DSM 8903 / Tp8T 6331), this protein is Isoleucine--tRNA ligase.